A 106-amino-acid polypeptide reads, in one-letter code: Thioredoxin-2 (106 aa).

The Thioredoxin domain occupies 1–106; the sequence is MVYQVKDKAD…RLEDVIKANI (106 aa). Catalysis depends on nucleophile residues cysteine 32 and cysteine 35. Cysteine 32 and cysteine 35 form a disulfide bridge.

Belongs to the thioredoxin family. In terms of assembly, monomer.

In terms of biological role, participates in various redox reactions through the reversible oxidation of its active center dithiol to a disulfide and catalyzes dithiol-disulfide exchange reactions. As a reducing substrate of peroxiredoxin 1, thioredoxin 2 is preferred over thioredoxin 1. The chain is Thioredoxin-2 from Drosophila melanogaster (Fruit fly).